An 88-amino-acid polypeptide reads, in one-letter code: Elongation factor 1-beta (88 aa).

The protein belongs to the EF-1-beta/EF-1-delta family.

In terms of biological role, promotes the exchange of GDP for GTP in EF-1-alpha/GDP, thus allowing the regeneration of EF-1-alpha/GTP that could then be used to form the ternary complex EF-1-alpha/GTP/AAtRNA. In Haloarcula marismortui (strain ATCC 43049 / DSM 3752 / JCM 8966 / VKM B-1809) (Halobacterium marismortui), this protein is Elongation factor 1-beta.